The following is a 113-amino-acid chain: Hydrogenase maturation factor HybF (113 aa).

His-2 and Glu-3 together coordinate Ni(2+). Residues Cys-73, Cys-76, Cys-89, and Cys-92 each coordinate Zn(2+).

This sequence belongs to the HypA/HybF family. HybF subfamily.

Involved in the maturation of [NiFe] hydrogenases. Required for nickel insertion into the metal center of the hydrogenase. The polypeptide is Hydrogenase maturation factor HybF (Proteus vulgaris).